Consider the following 104-residue polypeptide: UPF0213 protein YsiG (104 aa).

One can recognise a GIY-YIG domain in the interval asparagine 2 to leucine 79.

Belongs to the UPF0213 family.

The sequence is that of UPF0213 protein YsiG (ysiG) from Lactococcus lactis subsp. lactis (strain IL1403) (Streptococcus lactis).